The primary structure comprises 1036 residues: Isoleucine--tRNA ligase (1036 aa).

Positions Pro46 to His56 match the 'HIGH' region motif. The 'KMSKS' region motif lies at Lys589 to Arg593. An ATP-binding site is contributed by Lys592.

Belongs to the class-I aminoacyl-tRNA synthetase family. IleS type 2 subfamily. In terms of assembly, monomer. Zn(2+) serves as cofactor.

It is found in the cytoplasm. It carries out the reaction tRNA(Ile) + L-isoleucine + ATP = L-isoleucyl-tRNA(Ile) + AMP + diphosphate. Functionally, catalyzes the attachment of isoleucine to tRNA(Ile). As IleRS can inadvertently accommodate and process structurally similar amino acids such as valine, to avoid such errors it has two additional distinct tRNA(Ile)-dependent editing activities. One activity is designated as 'pretransfer' editing and involves the hydrolysis of activated Val-AMP. The other activity is designated 'posttransfer' editing and involves deacylation of mischarged Val-tRNA(Ile). In Chlamydia trachomatis serovar D (strain ATCC VR-885 / DSM 19411 / UW-3/Cx), this protein is Isoleucine--tRNA ligase.